A 1208-amino-acid chain; its full sequence is Neural cell adhesion molecule L1-like protein (1208 aa).

The N-terminal stretch at 1 to 24 is a signal peptide; it reads MEPLLLGRGLIVYLMFLLLKFSKA. Residues 25–1082 are Extracellular-facing; that stretch reads IEIPSSVQQV…LYDDISTQGW (1058 aa). 2 consecutive Ig-like C2-type domains span residues 35–124 and 128–223; these read PTII…EEIE and PSVP…MKLT. Intrachain disulfides connect Cys57–Cys109 and Cys153–Cys204. Lys231 and Asn299 each carry an N-linked (GlcNAc...) asparagine glycan. Ig-like C2-type domains are found at residues 235-328, 331-417, 423-510, and 515-607; these read PKLL…VIVE, PRWT…ANID, PLIQ…ANLD, and TKLR…TQVT. Disulfide bonds link Cys262–Cys310, Cys352–Cys401, Cys445–Cys494, and Cys536–Cys591. 2 N-linked (GlcNAc...) asparagine glycosylation sites follow: Asn476 and Asn482. The DGEA motif lies at 555–558; sequence DGEA. 2 N-linked (GlcNAc...) asparagine glycosylation sites follow: Asn562 and Asn580. 4 consecutive Fibronectin type-III domains span residues 614–709, 714–807, 809–914, and 918–1015; these read PPEN…TPPA, NPQN…SGED, PDTA…TPEG, and QPTF…LGEG. The tract at residues 693–716 is disordered; that stretch reads GRSQPSQPSDHHETPPAAPDRNPQ. Asn767, Asn822, Asn945, and Asn1026 each carry an N-linked (GlcNAc...) asparagine glycan. The helical transmembrane segment at 1083–1103 threads the bilayer; the sequence is FIGLMCAIALLTLLLLTVCFV. At 1104 to 1208 the chain is on the cytoplasmic side; the sequence is KRNRGGKYSV…SSTATFPLRA (105 aa). The interval 1131–1163 is disordered; it reads ETFGEYSDSDEKPLKGSLRSLNRDMQPTESADS. Residues Ser1147, Ser1160, and Ser1180 each carry the phosphoserine modification. A compositionally biased stretch (polar residues) spans 1149-1161; sequence RSLNRDMQPTESA. Residues 1181–1185 carry the FIG[AQ]Y motif; sequence FIGAY. The tract at residues 1189–1208 is disordered; sequence KEKGSVESNGSSTATFPLRA. The span at 1194–1208 shows a compositional bias: polar residues; that stretch reads VESNGSSTATFPLRA.

This sequence belongs to the immunoglobulin superfamily. L1/neurofascin/NgCAM family. As to quaternary structure, may interact with L1CAM. May interact with ITGB1/ITGA1 heterodimer and ITGB1/ITGA2 heterodimer as well as with ANK3. Cleavage by metalloprotease ADAM8 in the extracellular part generates 2 soluble forms (125 kDa and 165 kDa) in vitro and is inhibited by metalloprotease inhibitors. Cleaved by BACE1. Post-translationally, N-glycosylated. Contains N-linked oligosaccharides with a sulfated carbohydrate structure type HNK-1 (SO4-3-GlcUABeta1,3GalBeta1,4GlcNAc). In terms of processing, O-glycosylated. As to expression, expressed in the fetal and adult brain as well as in Schwann cell culture. Also detected in adult peripheral tissues.

It is found in the cell membrane. Its subcellular location is the secreted. It localises to the extracellular space. The protein localises to the extracellular matrix. Functionally, extracellular matrix and cell adhesion protein that plays a role in nervous system development and in synaptic plasticity. Both soluble and membranous forms promote neurite outgrowth of cerebellar and hippocampal neurons and suppress neuronal cell death. Plays a role in neuronal positioning of pyramidal neurons and in regulation of both the number of interneurons and the efficacy of GABAergic synapses. May play a role in regulating cell migration in nerve regeneration and cortical development. Potentiates integrin-dependent cell migration towards extracellular matrix proteins. Recruits ANK3 to the plasma membrane. This chain is Neural cell adhesion molecule L1-like protein (CHL1), found in Homo sapiens (Human).